The sequence spans 124 residues: Large ribosomal subunit protein bL12 (124 aa).

The protein belongs to the bacterial ribosomal protein bL12 family. As to quaternary structure, homodimer. Part of the ribosomal stalk of the 50S ribosomal subunit. Forms a multimeric L10(L12)X complex, where L10 forms an elongated spine to which 2 to 4 L12 dimers bind in a sequential fashion. Binds GTP-bound translation factors.

Functionally, forms part of the ribosomal stalk which helps the ribosome interact with GTP-bound translation factors. Is thus essential for accurate translation. This is Large ribosomal subunit protein bL12 from Christiangramia forsetii (strain DSM 17595 / CGMCC 1.15422 / KT0803) (Gramella forsetii).